The following is a 144-amino-acid chain: MPKNKGKGGKNRRRGKNENESEKRELVFKEDGQEYAQVIKMLGNGRLEALCFDGVKRLCHIRGKLRKKVWINTSDIILVGLRDYQDNKADVILKYNADEARSLKAYGELPEHAKINETDTFGPGDDDEIQFDDIGDDDEDIDDI.

Residues 1–15 (MPKNKGKGGKNRRRG) are compositionally biased toward basic residues. The segment at 1 to 26 (MPKNKGKGGKNRRRGKNENESEKREL) is disordered. The segment covering 16–26 (KNENESEKREL) has biased composition (basic and acidic residues). The region spanning 22–96 (EKRELVFKED…NKADVILKYN (75 aa)) is the S1-like domain. Residue Lys88 forms a Glycyl lysine isopeptide (Lys-Gly) (interchain with G-Cter in ubiquitin) linkage. Positions 114–144 (KINETDTFGPGDDDEIQFDDIGDDDEDIDDI) are disordered. The span at 124–144 (GDDDEIQFDDIGDDDEDIDDI) shows a compositional bias: acidic residues.

The protein belongs to the eIF-1A family. In terms of assembly, component of the 43S pre-initiation complex (43S PIC), which is composed of the 40S ribosomal subunit, EIF1, eIF1A (EIF1AX), eIF3 complex, EIF5 and eIF2-GTP-initiator tRNA complex (eIF2 ternary complex). Interacts with EIF5; this interaction contributes to the maintenance of EIF1 within the open 43S PIC. Interacts through its C-terminal domain (CTD) with the CTD of EIF5B; from the location of the start codon by the 43S complex until the formation of the 80S complex. Ubiquitous.

The protein localises to the cytoplasm. Functionally, component of the 43S pre-initiation complex (43S PIC), which binds to the mRNA cap-proximal region, scans mRNA 5'-untranslated region, and locates the initiation codon. This protein enhances formation of the cap-proximal complex. Together with EIF1, facilitates scanning, start codon recognition, promotion of the assembly of 48S complex at the initiation codon (43S PIC becomes 48S PIC after the start codon is reached), and dissociation of aberrant complexes. After start codon location, together with EIF5B orients the initiator methionine-tRNA in a conformation that allows 60S ribosomal subunit joining to form the 80S initiation complex. Is released after 80S initiation complex formation, just after GTP hydrolysis by EIF5B, and before release of EIF5B. Its globular part is located in the A site of the 40S ribosomal subunit. Its interaction with EIF5 during scanning contribute to the maintenance of EIF1 within the open 43S PIC. In contrast to yeast orthologs, does not bind EIF1. The polypeptide is Eukaryotic translation initiation factor 1A, Y-chromosomal (EIF1AY) (Homo sapiens (Human)).